The sequence spans 306 residues: Pre-mRNA-splicing factor cwf26 (306 aa).

Residues 130–152 (KAEERRKREEKSSNLDEEELRKS) are disordered. Residues 130–198 (KAEERRKREE…KEQQQGVVQV (69 aa)) adopt a coiled-coil conformation.

The protein belongs to the CWC26 family. As to quaternary structure, belongs to the 40S cdc5-associated complex (or cwf complex), a spliceosome sub-complex reminiscent of a late-stage spliceosome composed of the U2, U5 and U6 snRNAs and at least brr2, cdc5, cwf2/prp3, cwf3/syf1, cwf4/syf3, cwf5/ecm2, spp42/cwf6, cwf7/spf27, cwf8, cwf9, cwf10, cwf11, cwf12, prp45/cwf13, cwf14, cwf15, cwf16, cwf17, cwf18, cwf19, cwf20, cwf21, cwf22, cwf23, cwf24, cwf25, cwf26, cyp7/cwf27, cwf28, cwf29/ist3, lea1, msl1, prp5/cwf1, prp10, prp12/sap130, prp17, prp22, sap61, sap62, sap114, sap145, slu7, smb1, smd1, smd3, smf1, smg1 and syf2.

It is found in the cytoplasm. It localises to the nucleus. Involved in mRNA splicing. The sequence is that of Pre-mRNA-splicing factor cwf26 (cwf26) from Schizosaccharomyces pombe (strain 972 / ATCC 24843) (Fission yeast).